A 149-amino-acid polypeptide reads, in one-letter code: MSRPSILVLHGPNLNLLGQREPGIYGSVTLEKINQQLLSLAESLKCNIEFYQSNHEGNLVDSIQEALGCHNGILINAAAYTHTSVAIRDALAAVAIPAVEVHLSNIYRREDFRHHSFIAPIVIGQISGFGAQSYSLGLQALIHHLQTQT.

The Proton acceptor role is filled by Y25. Substrate contacts are provided by N76, H82, and D89. H102 (proton donor) is an active-site residue. Residues 103 to 104 and R113 each bind substrate; that span reads LS.

It belongs to the type-II 3-dehydroquinase family. In terms of assembly, homododecamer.

It catalyses the reaction 3-dehydroquinate = 3-dehydroshikimate + H2O. Its pathway is metabolic intermediate biosynthesis; chorismate biosynthesis; chorismate from D-erythrose 4-phosphate and phosphoenolpyruvate: step 3/7. Functionally, catalyzes a trans-dehydration via an enolate intermediate. This is 3-dehydroquinate dehydratase from Acaryochloris marina (strain MBIC 11017).